The primary structure comprises 402 residues: Zinc finger protein 586 (402 aa).

Positions 15–87 (VTFEDVAVNF…DQGGHSGERP (73 aa)) constitute a KRAB domain. A C2H2-type 1; degenerate zinc finger spans residues 88–116 (YECGEYRKLFKNKSCLTEPRRDHKHRNVR). The C2H2-type 2; degenerate zinc finger occupies 122–144 (YECSKYGKLFHQKPTLHIHERFH). A C2H2-type 3; degenerate zinc finger spans residues 150-172 (YECSECGKSFHQSSSLLQRQTLH). 8 consecutive C2H2-type zinc fingers follow at residues 178–200 (YECIECGKAFAEKSSLINHRKVH), 206–228 (YECNECGKSFAYTSSLIKHRRIH), 234–256 (YECSECGRSFAENSSLIKHLRVH), 262–284 (YECVECGKSFRRSSSLLQHQRVH), 290–312 (YECSECGKSFSLRSNLIHHQRVH), 317–339 (HECGQCGKSFSRKSSLIIHLRVH), 345–367 (YECSDCGKSFAENSSLIKHLRVH), and 373–395 (YECIDCGKSFRHSSSFRRHQRVH).

This sequence belongs to the krueppel C2H2-type zinc-finger protein family.

It is found in the nucleus. May be involved in transcriptional regulation. The polypeptide is Zinc finger protein 586 (ZNF586) (Homo sapiens (Human)).